Here is a 204-residue protein sequence, read N- to C-terminus: Leucyl/phenylalanyl-tRNA--protein transferase (204 aa).

The protein belongs to the L/F-transferase family.

It localises to the cytoplasm. It carries out the reaction N-terminal L-lysyl-[protein] + L-leucyl-tRNA(Leu) = N-terminal L-leucyl-L-lysyl-[protein] + tRNA(Leu) + H(+). It catalyses the reaction N-terminal L-arginyl-[protein] + L-leucyl-tRNA(Leu) = N-terminal L-leucyl-L-arginyl-[protein] + tRNA(Leu) + H(+). The enzyme catalyses L-phenylalanyl-tRNA(Phe) + an N-terminal L-alpha-aminoacyl-[protein] = an N-terminal L-phenylalanyl-L-alpha-aminoacyl-[protein] + tRNA(Phe). Functions in the N-end rule pathway of protein degradation where it conjugates Leu, Phe and, less efficiently, Met from aminoacyl-tRNAs to the N-termini of proteins containing an N-terminal arginine or lysine. In Rhizobium leguminosarum bv. trifolii (strain WSM2304), this protein is Leucyl/phenylalanyl-tRNA--protein transferase.